Reading from the N-terminus, the 82-residue chain is Probable 26S proteasome complex subunit dss-1 (82 aa).

A disordered region spans residues 56-82 (NWDDETHESEFSKQLKEELRKSGHQVA). Positions 63–76 (ESEFSKQLKEELRK) are enriched in basic and acidic residues.

This sequence belongs to the DSS1/SEM1 family. Part of the 26S proteasome. As to expression, expressed in intestinal epithelium and head neurons.

The protein resides in the nucleus. It is found in the cytoplasm. Subunit of the 26S proteasome which plays a role in ubiquitin-dependent proteolysis. Has an essential role in oogenesis and larval growth. Required for intestinal function and default lifespan. The sequence is that of Probable 26S proteasome complex subunit dss-1 (dss-1) from Caenorhabditis elegans.